The sequence spans 410 residues: Multifunctional CCA protein (410 aa).

Residues glycine 8 and arginine 11 each contribute to the ATP site. CTP contacts are provided by glycine 8 and arginine 11. Aspartate 21 and aspartate 23 together coordinate Mg(2+). The ATP site is built by arginine 91, arginine 143, and arginine 146. CTP contacts are provided by arginine 91, arginine 143, and arginine 146. Positions 232–333 (TGVHVMMVVD…VRLLERSDAI (102 aa)) constitute an HD domain.

It belongs to the tRNA nucleotidyltransferase/poly(A) polymerase family. Bacterial CCA-adding enzyme type 1 subfamily. Monomer. Can also form homodimers and oligomers. It depends on Mg(2+) as a cofactor. Ni(2+) serves as cofactor.

The enzyme catalyses a tRNA precursor + 2 CTP + ATP = a tRNA with a 3' CCA end + 3 diphosphate. It catalyses the reaction a tRNA with a 3' CCA end + 2 CTP + ATP = a tRNA with a 3' CCACCA end + 3 diphosphate. In terms of biological role, catalyzes the addition and repair of the essential 3'-terminal CCA sequence in tRNAs without using a nucleic acid template. Adds these three nucleotides in the order of C, C, and A to the tRNA nucleotide-73, using CTP and ATP as substrates and producing inorganic pyrophosphate. tRNA 3'-terminal CCA addition is required both for tRNA processing and repair. Also involved in tRNA surveillance by mediating tandem CCA addition to generate a CCACCA at the 3' terminus of unstable tRNAs. While stable tRNAs receive only 3'-terminal CCA, unstable tRNAs are marked with CCACCA and rapidly degraded. The sequence is that of Multifunctional CCA protein from Paraburkholderia phytofirmans (strain DSM 17436 / LMG 22146 / PsJN) (Burkholderia phytofirmans).